The chain runs to 778 residues: Phenylalanine--tRNA ligase beta subunit (778 aa).

Residues Tyr-39–Ser-150 form the tRNA-binding domain. The region spanning His-391–Ser-467 is the B5 domain. The Mg(2+) site is built by Asp-445, Asp-451, Glu-454, and Glu-455. One can recognise an FDX-ACB domain in the interval Ser-686–Arg-778.

It belongs to the phenylalanyl-tRNA synthetase beta subunit family. Type 1 subfamily. In terms of assembly, tetramer of two alpha and two beta subunits. Requires Mg(2+) as cofactor.

It is found in the cytoplasm. It catalyses the reaction tRNA(Phe) + L-phenylalanine + ATP = L-phenylalanyl-tRNA(Phe) + AMP + diphosphate + H(+). This chain is Phenylalanine--tRNA ligase beta subunit, found in Sulfurimonas denitrificans (strain ATCC 33889 / DSM 1251) (Thiomicrospira denitrificans (strain ATCC 33889 / DSM 1251)).